Reading from the N-terminus, the 60-residue chain is Large ribosomal subunit protein uL30 (60 aa).

Belongs to the universal ribosomal protein uL30 family. Part of the 50S ribosomal subunit.

This is Large ribosomal subunit protein uL30 from Dehalococcoides mccartyi (strain ATCC BAA-2266 / KCTC 15142 / 195) (Dehalococcoides ethenogenes (strain 195)).